A 474-amino-acid polypeptide reads, in one-letter code: Glutamate--tRNA ligase 2 (474 aa).

The short motif at 16–26 (PSPTGFLHIGG) is the 'HIGH' region element. The 'KMSKS' region signature appears at 245-249 (KLSKR). Lys-248 is an ATP binding site.

It belongs to the class-I aminoacyl-tRNA synthetase family. Glutamate--tRNA ligase type 1 subfamily. Monomer.

The protein resides in the cytoplasm. It carries out the reaction tRNA(Glu) + L-glutamate + ATP = L-glutamyl-tRNA(Glu) + AMP + diphosphate. Catalyzes the attachment of glutamate to tRNA(Glu) in a two-step reaction: glutamate is first activated by ATP to form Glu-AMP and then transferred to the acceptor end of tRNA(Glu). The protein is Glutamate--tRNA ligase 2 of Rhizorhabdus wittichii (strain DSM 6014 / CCUG 31198 / JCM 15750 / NBRC 105917 / EY 4224 / RW1) (Sphingomonas wittichii).